A 669-amino-acid polypeptide reads, in one-letter code: DNA mismatch repair protein MutL (669 aa).

A disordered region spans residues 343-408 (SAFHRAEPEE…RAPSDSSVRE (66 aa)). Residues 344–356 (AFHRAEPEERESQ) are compositionally biased toward basic and acidic residues. Positions 357–372 (PETTPQYSPQSVSTTV) are enriched in polar residues. The segment covering 390–408 (TDYEIKPRDRAPSDSSVRE) has biased composition (basic and acidic residues).

The protein belongs to the DNA mismatch repair MutL/HexB family.

In terms of biological role, this protein is involved in the repair of mismatches in DNA. It is required for dam-dependent methyl-directed DNA mismatch repair. May act as a 'molecular matchmaker', a protein that promotes the formation of a stable complex between two or more DNA-binding proteins in an ATP-dependent manner without itself being part of a final effector complex. The polypeptide is DNA mismatch repair protein MutL (Vibrio parahaemolyticus serotype O3:K6 (strain RIMD 2210633)).